The primary structure comprises 58 residues: Small ribosomal subunit protein bS21 (58 aa).

It belongs to the bacterial ribosomal protein bS21 family.

This Staphylococcus saprophyticus subsp. saprophyticus (strain ATCC 15305 / DSM 20229 / NCIMB 8711 / NCTC 7292 / S-41) protein is Small ribosomal subunit protein bS21.